Here is a 191-residue protein sequence, read N- to C-terminus: Peptidyl-tRNA hydrolase (191 aa).

Tyr14 provides a ligand contact to tRNA. The active-site Proton acceptor is His19. The tRNA site is built by Tyr64, Asn66, and Asn112.

It belongs to the PTH family. As to quaternary structure, monomer.

It is found in the cytoplasm. It catalyses the reaction an N-acyl-L-alpha-aminoacyl-tRNA + H2O = an N-acyl-L-amino acid + a tRNA + H(+). In terms of biological role, hydrolyzes ribosome-free peptidyl-tRNAs (with 1 or more amino acids incorporated), which drop off the ribosome during protein synthesis, or as a result of ribosome stalling. Catalyzes the release of premature peptidyl moieties from peptidyl-tRNA molecules trapped in stalled 50S ribosomal subunits, and thus maintains levels of free tRNAs and 50S ribosomes. The polypeptide is Peptidyl-tRNA hydrolase (Clostridium botulinum (strain Eklund 17B / Type B)).